We begin with the raw amino-acid sequence, 79 residues long: Putative antitoxin VapB12 (79 aa).

This sequence belongs to the UPF0330 family.

Functionally, possibly the antitoxin component of a type II toxin-antitoxin (TA) system. Its cognate toxin is VapC12 (Potential). This is Putative antitoxin VapB12 (vapB12) from Sulfurisphaera tokodaii (strain DSM 16993 / JCM 10545 / NBRC 100140 / 7) (Sulfolobus tokodaii).